The sequence spans 644 residues: Biosynthetic arginine decarboxylase (644 aa).

At Lys113 the chain carries N6-(pyridoxal phosphate)lysine. 293–303 contacts substrate; that stretch reads FDVGGGLGVDY.

It belongs to the Orn/Lys/Arg decarboxylase class-II family. SpeA subfamily. Requires Mg(2+) as cofactor. The cofactor is pyridoxal 5'-phosphate.

The enzyme catalyses L-arginine + H(+) = agmatine + CO2. Catalyzes the biosynthesis of agmatine from arginine. The sequence is that of Biosynthetic arginine decarboxylase from Pasteurella multocida (strain Pm70).